Consider the following 63-residue polypeptide: Kappa-theraphotoxin-Cg3a 1 (63 aa).

A signal peptide spans 1 to 21 (MKNTSILFILGLALLLVLAFE). Residues 22–29 (VQVGESDG) constitute a propeptide that is removed on maturation. Disulfide bonds link cysteine 31/cysteine 46, cysteine 38/cysteine 51, and cysteine 45/cysteine 58.

Belongs to the neurotoxin 10 (Hwtx-1) family. 44 (Jztx-4) subfamily. Expressed by the venom gland.

The protein resides in the secreted. Gating modifier of Kv2.1/KCNB1, Kv2.2/KCNB2 and Kv4.3/KCND3 channels. The polypeptide is Kappa-theraphotoxin-Cg3a 1 (Chilobrachys guangxiensis (Chinese earth tiger tarantula)).